We begin with the raw amino-acid sequence, 360 residues long: Phospho-N-acetylmuramoyl-pentapeptide-transferase (360 aa).

10 consecutive transmembrane segments (helical) span residues 21–41, 73–93, 94–114, 132–152, 168–188, 199–219, 239–259, 263–283, 288–308, and 338–358; these read YLTF…LWIG, TMGG…WGDL, SNPY…IGFV, WKYF…YALG, IMPQ…VGTS, GLAI…AWAT, LVIF…FNTY, VFMG…IAVL, FLLV…ILQV, and VIIR…VTLK.

Belongs to the glycosyltransferase 4 family. MraY subfamily. Mg(2+) is required as a cofactor.

The protein resides in the cell inner membrane. It carries out the reaction UDP-N-acetyl-alpha-D-muramoyl-L-alanyl-gamma-D-glutamyl-meso-2,6-diaminopimeloyl-D-alanyl-D-alanine + di-trans,octa-cis-undecaprenyl phosphate = di-trans,octa-cis-undecaprenyl diphospho-N-acetyl-alpha-D-muramoyl-L-alanyl-D-glutamyl-meso-2,6-diaminopimeloyl-D-alanyl-D-alanine + UMP. It participates in cell wall biogenesis; peptidoglycan biosynthesis. Its function is as follows. Catalyzes the initial step of the lipid cycle reactions in the biosynthesis of the cell wall peptidoglycan: transfers peptidoglycan precursor phospho-MurNAc-pentapeptide from UDP-MurNAc-pentapeptide onto the lipid carrier undecaprenyl phosphate, yielding undecaprenyl-pyrophosphoryl-MurNAc-pentapeptide, known as lipid I. This chain is Phospho-N-acetylmuramoyl-pentapeptide-transferase, found in Mannheimia succiniciproducens (strain KCTC 0769BP / MBEL55E).